The chain runs to 266 residues: UPF0294 protein YafD (266 aa).

The protein belongs to the UPF0294 family.

The protein localises to the cytoplasm. In Salmonella agona (strain SL483), this protein is UPF0294 protein YafD.